The chain runs to 350 residues: Probable galactose-1-phosphate uridylyltransferase (350 aa).

The tract at residues 31-52 (PWSGQQEKAQKNELPEFDPTNP) is disordered. Zn(2+) is bound at residue Cys54. UDP-alpha-D-glucose-binding positions include 76–77 (ND) and Asn152. Residue His163 participates in Zn(2+) binding. His165 acts as the Tele-UMP-histidine intermediate in catalysis. UDP-alpha-D-glucose is bound by residues Gln167, 314–317 (KFMV), and 319–320 (FE).

This sequence belongs to the galactose-1-phosphate uridylyltransferase type 1 family. In terms of assembly, homodimer. Requires Zn(2+) as cofactor.

The catalysed reaction is alpha-D-galactose 1-phosphate + UDP-alpha-D-glucose = alpha-D-glucose 1-phosphate + UDP-alpha-D-galactose. Its pathway is carbohydrate metabolism; galactose metabolism. This is Probable galactose-1-phosphate uridylyltransferase (Galt) from Drosophila melanogaster (Fruit fly).